Here is a 110-residue protein sequence, read N- to C-terminus: Nucleoid-associated protein Tola_2216 (110 aa).

The protein belongs to the YbaB/EbfC family. Homodimer.

Its subcellular location is the cytoplasm. It is found in the nucleoid. In terms of biological role, binds to DNA and alters its conformation. May be involved in regulation of gene expression, nucleoid organization and DNA protection. In Tolumonas auensis (strain DSM 9187 / NBRC 110442 / TA 4), this protein is Nucleoid-associated protein Tola_2216.